Consider the following 490-residue polypeptide: Bifunctional protein HldE (490 aa).

Positions 1–330 (MLDFEQLSPA…RKILPHAFLA (330 aa)) are ribokinase. Residue 205–208 (NRKE) coordinates ATP. Residue aspartate 275 is part of the active site. The cytidylyltransferase stretch occupies residues 358–490 (FTNGCFDILH…LVARAQNGKS (133 aa)).

In the N-terminal section; belongs to the carbohydrate kinase PfkB family. It in the C-terminal section; belongs to the cytidylyltransferase family. In terms of assembly, homodimer.

It carries out the reaction D-glycero-beta-D-manno-heptose 7-phosphate + ATP = D-glycero-beta-D-manno-heptose 1,7-bisphosphate + ADP + H(+). The catalysed reaction is D-glycero-beta-D-manno-heptose 1-phosphate + ATP + H(+) = ADP-D-glycero-beta-D-manno-heptose + diphosphate. Its pathway is nucleotide-sugar biosynthesis; ADP-L-glycero-beta-D-manno-heptose biosynthesis; ADP-L-glycero-beta-D-manno-heptose from D-glycero-beta-D-manno-heptose 7-phosphate: step 1/4. It participates in nucleotide-sugar biosynthesis; ADP-L-glycero-beta-D-manno-heptose biosynthesis; ADP-L-glycero-beta-D-manno-heptose from D-glycero-beta-D-manno-heptose 7-phosphate: step 3/4. In terms of biological role, catalyzes the phosphorylation of D-glycero-D-manno-heptose 7-phosphate at the C-1 position to selectively form D-glycero-beta-D-manno-heptose-1,7-bisphosphate. Catalyzes the ADP transfer from ATP to D-glycero-beta-D-manno-heptose 1-phosphate, yielding ADP-D-glycero-beta-D-manno-heptose. The protein is Bifunctional protein HldE of Rhodopseudomonas palustris (strain BisA53).